The following is an 859-amino-acid chain: MYILVWKKGQQIKTFHTLDEAAQFKAASNIDEAQMFSVTVASAISASGGSTEATNLRRLMYLSKSTNPEECNPQFLAEMARVAFIRNREIRVSGFLMYSSPFFIQVIVETDEDLDFLFAKISADPRHEMCIVLANGPGTGRMYGDWHMKDSHLDSITTHTAMKTILYQIARSFSSMWIYLQKSAANMLMLGKDPAAQPPERRSVVVTFIYLVEFCSIFSHPNLTEKTADVLSTFVYVCVKNVEGSGGNIAKFIPAICMTYWPIIRTKEALTAIQQISEDLAQLRSQQAQGSAVSLRYSQAGVHYGRGMQCNAGSRKSDFTLLGDCINTTSRIATLAKKLKTPLLFGFEVRCLLGDEKREEIEGAGIHQVKGRDKPVVVYQFPGPDLDVAMVRQKIEQFTPGRFRCQMPVVEYEALPISQRPPIFDDTPKSNPRPRTPGYGGRQRSDSLVDRLIRIANLSGFSESATGDTTLTTLTYISQATRPMSRLDLSAIMPTATRRNAQQSNIGTVLHENGLFVQTLEGPKDAVVNLYLRIRQDPRHTDVTTVHMAPLQERVYTSEWTLTLATEEMLATFPPVQDVLSQLAKSYTSLETYVPSTVVRYLTAGNNPRNLMPVSCGVVMLATDISSFTSLTEISSFTEVWMICNTFIDACTSAICQEGGEVIKLIGDCVTPYFPGNNADLAVAAAQELFIFCRQLREAFVDVLDVRGCVSCAVGMDYGQVVMAQCGLLRLSDYVAAGAVSAGVVEVEAITREVGYQFVVTVPDADRVQPQFRDYGIEPTPQAIGGLPCYGIVREVFDLPVESIKRGIKAMHAARSGEQPLTEPEQAKPDFRVSPGRDRHGVSGRRSNSSQGKGSIQVG.

The BLUF 1 domain maps to 56-149; sequence LRRLMYLSKS…GRMYGDWHMK (94 aa). A disordered region spans residues 420–444; that stretch reads RPPIFDDTPKSNPRPRTPGYGGRQR. The region spanning 471-563 is the BLUF 2 domain; the sequence is LTTLTYISQA…RVYTSEWTLT (93 aa). Positions 814–859 are disordered; the sequence is ARSGEQPLTEPEQAKPDFRVSPGRDRHGVSGRRSNSSQGKGSIQVG. Basic and acidic residues predominate over residues 825 to 841; the sequence is EQAKPDFRVSPGRDRHG. A compositionally biased stretch (polar residues) spans 845–859; it reads RRSNSSQGKGSIQVG.

Heterotetramer of two alpha and two beta subunits.

It localises to the cell projection. The protein localises to the cilium. The protein resides in the flagellum. This is Photoactivated adenylate cyclase subunit beta-like protein ST- from Euglena gracilis.